The following is a 478-amino-acid chain: RNA pseudouridine synthase 3, mitochondrial (478 aa).

The N-terminal 20 residues, 1 to 20 (MWKAKTCFRQIYLTVLIRRY), are a transit peptide targeting the mitochondrion. The 71-residue stretch at 92-162 (EEIYDKAIQT…MRISKRYDTI (71 aa)) folds into the S4 RNA-binding domain. Residue D232 is part of the active site.

It belongs to the pseudouridine synthase RluA family.

Its subcellular location is the mitochondrion. It carries out the reaction a uridine in RNA = a pseudouridine in RNA. The polypeptide is RNA pseudouridine synthase 3, mitochondrial (Arabidopsis thaliana (Mouse-ear cress)).